A 253-amino-acid polypeptide reads, in one-letter code: uncharacterized protein (253 aa).

The N-terminal stretch at 1-19 is a signal peptide; that stretch reads MRYLKRITIYISLLILVSG. The N-palmitoyl cysteine moiety is linked to residue Cys20. Cys20 is lipidated: S-diacylglycerol cysteine.

Belongs to the staphylococcal tandem lipoprotein family.

It is found in the cell membrane. This is an uncharacterized protein from Staphylococcus epidermidis (strain ATCC 12228 / FDA PCI 1200).